A 117-amino-acid polypeptide reads, in one-letter code: Large ribosomal subunit protein uL18 (117 aa).

It belongs to the universal ribosomal protein uL18 family. Part of the 50S ribosomal subunit; part of the 5S rRNA/L5/L18/L25 subcomplex. Contacts the 5S and 23S rRNAs.

Functionally, this is one of the proteins that bind and probably mediate the attachment of the 5S RNA into the large ribosomal subunit, where it forms part of the central protuberance. The polypeptide is Large ribosomal subunit protein uL18 (Proteus mirabilis (strain HI4320)).